The chain runs to 373 residues: Forkhead box protein F1 (373 aa).

The segment at 1–51 is disordered; sequence MTAEIQQPPSQPPAQSSPMSAATDKHGGQPSVMESANCATKTKKTNAGIRR. Positions 13-22 are enriched in low complexity; the sequence is PAQSSPMSAA. The segment at residues 54–148 is a DNA-binding region (fork-head); the sequence is KPPYSYIALI…EEGSFRRRPR (95 aa). Disordered regions lie at residues 236–255 and 283–306; these read GSSG…LGGG and QPLS…SLDQ. Residues 286–306 are compositionally biased toward low complexity; that stretch reads SPCNSAANPLSSSLSSHSLDQ.

The protein resides in the nucleus. Its function is as follows. Probable transcription factor. Required for smooth muscle (visceral mesoderm) differentiation during gut development. Also required for normal proliferation of the lateral plate mesoderm. Acts as a downstream mediator of bmp4-signaling. The protein is Forkhead box protein F1 of Xenopus tropicalis (Western clawed frog).